We begin with the raw amino-acid sequence, 419 residues long: eIF5-mimic protein 1 (419 aa).

Residues 1-22 are disordered; the sequence is MNKHQKPVLTGQRFKTRKRDEK. Lys117 bears the N6-acetyllysine mark. A W2 domain is found at 248-415; sequence VQQSLGTRKE…QNAEEESESE (168 aa). 3 positions are modified to phosphoserine: Ser412, Ser414, and Ser419.

This sequence belongs to the BZW family. Interacts with EIF3E, EIF2S2 and EIF3C.

The protein localises to the cytoplasm. In terms of biological role, translation initiation regulator which represses non-AUG initiated translation and repeat-associated non-AUG (RAN) initiated translation by acting as a competitive inhibitor of eukaryotic translation initiation factor 5 (EIF5) function. Increases the accuracy of translation initiation by impeding EIF5-dependent translation from non-AUG codons by competing with it for interaction with EIF2S2 within the 43S pre-initiation complex (PIC) in an EIF3C-binding dependent manner. The sequence is that of eIF5-mimic protein 1 (Bzw2) from Mus musculus (Mouse).